Consider the following 207-residue polypeptide: Succinyl-CoA:3-ketoacid coenzyme A transferase subunit B (207 aa).

Glu-43 is a catalytic residue.

This sequence belongs to the 3-oxoacid CoA-transferase subunit B family. In terms of assembly, heterodimer of a subunit A and a subunit B.

The enzyme catalyses a 3-oxo acid + succinyl-CoA = a 3-oxoacyl-CoA + succinate. The chain is Succinyl-CoA:3-ketoacid coenzyme A transferase subunit B (scoB) from Helicobacter pylori (strain J99 / ATCC 700824) (Campylobacter pylori J99).